Consider the following 1469-residue polypeptide: snRNA-activating protein complex subunit 4 (1469 aa).

The interval Glu-16–Asp-82 is disordered. Positions Gly-24–Ser-36 are enriched in low complexity. Residues Leu-37–Pro-53 show a composition bias toward acidic residues. Ser-68 carries the post-translational modification Phosphoserine. The SNAPC5-binding stretch occupies residues Glu-84–Gly-133. The Myb-like 1 domain occupies Glu-250–Glu-288. The HTH myb-type 1 domain maps to His-289 to Ala-343. A DNA-binding region (H-T-H motif) is located at residues Trp-317–Asn-341. The region spanning Leu-344–Leu-395 is the Myb-like 2 domain. HTH myb-type domains lie at Asp-396 to Leu-451 and Lys-452 to Gln-503. DNA-binding regions (H-T-H motif) lie at residues Trp-424–Leu-447 and Trp-476–Met-499. Disordered stretches follow at residues Lys-501 to Ala-558, Gln-577 to Glu-661, Arg-685 to Ser-710, Ala-834 to Ser-894, Pro-932 to Leu-981, Pro-1001 to Thr-1051, Ala-1121 to Ala-1167, and Ile-1184 to Lys-1266. A compositionally biased stretch (basic residues) spans Gln-503 to Val-516. Residues Ser-519–Ser-541 are compositionally biased toward low complexity. The residue at position 599 (Ser-599) is a Phosphoserine. The span at Lys-602 to Ala-618 shows a compositional bias: polar residues. At Ser-626 the chain carries Phosphoserine. The span at Pro-932–Gly-944 shows a compositional bias: pro residues. The segment covering Pro-951–Ser-968 has biased composition (low complexity). Positions Ile-1014 to Pro-1029 are enriched in polar residues. Pro residues predominate over residues Glu-1039–Thr-1051. Phosphothreonine is present on Thr-1157. Positions Ile-1184–Pro-1195 are enriched in basic and acidic residues. Ser-1224 carries the post-translational modification Phosphoserine. An SNAPC2-binding region spans residues Ala-1281–Pro-1393. 3 positions are modified to phosphoserine: Ser-1398, Ser-1400, and Ser-1440. The interval Ala-1430–Asp-1449 is disordered. Residues Cys-1436–Ser-1445 are compositionally biased toward polar residues.

As to quaternary structure, part of the SNAPc complex composed of 5 subunits: SNAPC1, SNAPC2, SNAPC3, SNAPC4 and SNAPC5. SNAPC4 interacts with SNAPC1, SNAPC2, SNAPC5, BRF2 and TBP.

The protein resides in the nucleus. In terms of biological role, part of the SNAPc complex required for the transcription of both RNA polymerase II and III small-nuclear RNA genes. Binds to the proximal sequence element (PSE), a non-TATA-box basal promoter element common to these 2 types of genes. Recruits TBP and BRF2 to the U6 snRNA TATA box. This Homo sapiens (Human) protein is snRNA-activating protein complex subunit 4.